The sequence spans 326 residues: Isopenicillin N synthase (326 aa).

R84, Y88, and Y186 together coordinate isopenicillin N. Residues R84, Y88, Y186, H209, and D211 each contribute to the N-[(5S)-5-amino-5-carboxypentanoyl]-L-cysteinyl-D-valine site. In terms of domain architecture, Fe2OG dioxygenase spans 183–283 (LIRYPFLENY…RLSIPFFANL (101 aa)). Fe(2+) is bound by residues H209, D211, and H265. 2-oxoglutarate is bound at residue R274. S276 is a binding site for isopenicillin N. S276 is an N-[(5S)-5-amino-5-carboxypentanoyl]-L-cysteinyl-D-valine binding site.

This sequence belongs to the iron/ascorbate-dependent oxidoreductase family. The cofactor is Fe cation. L-ascorbate is required as a cofactor.

It carries out the reaction N-[(5S)-5-amino-5-carboxypentanoyl]-L-cysteinyl-D-valine + O2 = isopenicillin N + 2 H2O. Its pathway is antibiotic biosynthesis; penicillin G biosynthesis; penicillin G from L-alpha-aminoadipate and L-cysteine and L-valine: step 2/3. Removes, in the presence of oxygen, 4 hydrogen atoms from delta-L-(alpha-aminoadipyl)-L-cysteinyl-D-valine (ACV) to form the azetidinone and thiazolidine rings of isopenicillin. In Lysobacter lactamgenus, this protein is Isopenicillin N synthase (pcbC).